Here is a 459-residue protein sequence, read N- to C-terminus: Argininosuccinate lyase (459 aa).

This sequence belongs to the lyase 1 family. Argininosuccinate lyase subfamily.

The protein resides in the cytoplasm. It carries out the reaction 2-(N(omega)-L-arginino)succinate = fumarate + L-arginine. The protein operates within amino-acid biosynthesis; L-arginine biosynthesis; L-arginine from L-ornithine and carbamoyl phosphate: step 3/3. The sequence is that of Argininosuccinate lyase from Methylobacterium radiotolerans (strain ATCC 27329 / DSM 1819 / JCM 2831 / NBRC 15690 / NCIMB 10815 / 0-1).